Consider the following 424-residue polypeptide: MPAILDVHGREVLDSRGNPTVEAEVYLEDGSVGRAIVPSGASTGSREALELRDNDPKRYKGKGVLQAVKNINEIIAQELIGLEALNQYTVDKTMLELDGTENKSRLGANAILAVSLATARAAAASLGVPLYVYLGGVQARELPTPLMNVINGGKHADNPLDFQEYMIVPLASTFKESLRWAVEVFHTLRSILKSKGLNTNVGDEGGFAPYLEKNEDPLAILVEAIQKAGFEPGKDVALALDLAASEFYEDGKYILKAEGKELTSDEMISLLEYLCDKYPIVSIEDGLSEKDWDGWKKLTDKLGKRVQLVGDDIFVTNPQILAEGIEKGIANAILVKVNQIGSLTETLDTIRIAHQAGYRTVISHRSGETEDTFIADLAVAVNSGQIKTGSLSRTDRIAKYNQLLRIEEDLGEAALYRGILNFKR.

Position 163 (Q163) interacts with (2R)-2-phosphoglycerate. E204 functions as the Proton donor in the catalytic mechanism. The Mg(2+) site is built by D241, E284, and D311. 4 residues coordinate (2R)-2-phosphoglycerate: K336, R365, S366, and K387. K336 acts as the Proton acceptor in catalysis.

The protein belongs to the enolase family. The cofactor is Mg(2+).

The protein resides in the cytoplasm. The protein localises to the secreted. Its subcellular location is the cell surface. The catalysed reaction is (2R)-2-phosphoglycerate = phosphoenolpyruvate + H2O. Its pathway is carbohydrate degradation; glycolysis; pyruvate from D-glyceraldehyde 3-phosphate: step 4/5. In terms of biological role, catalyzes the reversible conversion of 2-phosphoglycerate (2-PG) into phosphoenolpyruvate (PEP). It is essential for the degradation of carbohydrates via glycolysis. This chain is Enolase, found in Dictyoglomus turgidum (strain DSM 6724 / Z-1310).